We begin with the raw amino-acid sequence, 232 residues long: Aspartate racemase (232 aa).

49–51 (DRT) is a binding site for substrate. Residue Cys84 is the Proton donor/acceptor of the active site. Residues 85–87 (NTA) and Lys166 contribute to the substrate site. Cys195 acts as the Proton donor/acceptor in catalysis.

The protein belongs to the aspartate/glutamate racemases family.

The catalysed reaction is L-aspartate = D-aspartate. The sequence is that of Aspartate racemase from Thermococcus sp. (strain KS-8).